The primary structure comprises 312 residues: Olfactory receptor 6C1 (312 aa).

Over 1–23 (MRNHTEITEFILLGLTDDPNFQV) the chain is Extracellular. Residue N3 is glycosylated (N-linked (GlcNAc...) asparagine). A helical transmembrane segment spans residues 24-44 (VIFVFLLITYMLSITGNLTLI). The Cytoplasmic portion of the chain corresponds to 45–52 (TITLLDSH). A helical transmembrane segment spans residues 53 to 73 (LQTPMYFFLRNFSILEISFTT). The Extracellular segment spans residues 74-97 (VSIPKFLGNIISGDKTISFNNCIV). C95 and C187 form a disulfide bridge. The chain crosses the membrane as a helical span at residues 98–118 (QLFFFILLGVTEFYLLAAMSY). Over 119–137 (DRYVAICKPLHCLSIMNRR) the chain is Cytoplasmic. The helical transmembrane segment at 138–158 (VCTLLVFTSWLVSFLIIFPAL) threads the bilayer. Over 159-195 (MLLLKLHYCRSNIIDHFTCDYFPLLQLACSDTKFLEV) the chain is Extracellular. Residues 196-215 (MGFSCAAFTLMFTLALIFLS) traverse the membrane as a helical segment. The Cytoplasmic segment spans residues 216–235 (YIYIIRTILRIPSTSQRTKA). The helical transmembrane segment at 236 to 256 (FSTCSSHMVVVSISYGSCIFM) threads the bilayer. The Extracellular portion of the chain corresponds to 257 to 269 (YIKPSAKDRVSLS). The helical transmembrane segment at 270 to 290 (KGVAILNTSVAPMMNPFIYSL) threads the bilayer. At 291-312 (RNQQVKQAFINMARKTVFFTST) the chain is on the cytoplasmic side.

It belongs to the G-protein coupled receptor 1 family.

It is found in the cell membrane. Odorant receptor. This is Olfactory receptor 6C1 (OR6C1) from Homo sapiens (Human).